A 758-amino-acid polypeptide reads, in one-letter code: Transmembrane E3 ubiquitin-protein ligase 1 (758 aa).

The first 26 residues, 1-26 (MEIDGNTLVFIIVILFLFFSSPGGDG), serve as a signal peptide directing secretion. The Lumenal portion of the chain corresponds to 27-398 (VSSQYEFNQL…YELKIMSIRK (372 aa)). Residues 399–419 (HLLFGIALFAAQIYLLLTQMH) form a helical membrane-spanning segment. Over 420 to 431 (HTNTPSMVNKIS) the chain is Cytoplasmic. A helical membrane pass occupies residues 432–452 (FYCFSMINLVDGSLATLYFVA). The Lumenal segment spans residues 453–458 (ASVVPE). Residues 459 to 479 (LYLPLVISAFSCFILASIFEI) traverse the membrane as a helical segment. Residues 480 to 523 (RYLISIYASQVNEQNVGIINLLRGNTGTYDENRPRPAFIPDEGS) lie on the Cytoplasmic side of the membrane. A helical transmembrane segment spans residues 524–544 (IGGSLYGRFFFMLIIFTFLIL). Residues 545–553 (SSTSWPRQL) lie on the Lumenal side of the membrane. Residues 554-574 (RMVFEYILIFILNSYWIPQIF) form a helical membrane-spanning segment. Over 575 to 602 (RNAVKGIPSRRERARSSIGGNRSQNKMP) the chain is Cytoplasmic. A helical transmembrane segment spans residues 603–623 (LLWSFVIGTTIIRSLPVVYVF). At 624–635 (TYSSNVFRHHKD) the chain is on the lumenal side. The chain crosses the membrane as a helical span at residues 636 to 656 (VHFVVFLSLWLLFQISILYSQ). Residues 657-758 (DVLGSRWFLP…PVCRSPLPPL (102 aa)) lie on the Cytoplasmic side of the membrane. The RING-type; atypical zinc finger occupies 699–752 (CAICMSDVPIYIEEIPETHKVDQHSYMVTPCNHVFHTSCLENWMNYKLQCPVCR).

Component of the DSC E3 ligase complexes composed of at least TUL1, DSC2, DSC3, UBX3, CDC48 as well as VLD1 for the vacuole-localized complex or GLD1 for the Golgi/endosome-localized complex. Interacts with UBC4.

It is found in the golgi apparatus membrane. It catalyses the reaction S-ubiquitinyl-[E2 ubiquitin-conjugating enzyme]-L-cysteine + [acceptor protein]-L-lysine = [E2 ubiquitin-conjugating enzyme]-L-cysteine + N(6)-ubiquitinyl-[acceptor protein]-L-lysine.. The protein operates within protein modification; protein ubiquitination. Functionally, catalytic component of the DSC E3 ubiquitin ligase complexes that tag proteins present in Golgi, endosome and vacuole membranes and function in protein homeostasis under non-stress conditions and support a role in protein quality control. Mediates ubiquitination of vacuolar proteins such as CPS1, PPN1, PEP12 and other proteins containing exposed hydrophilic residues within their transmembrane domains, leading to their sorting into internal vesicles in late endosomes. Targets also the unpalmitoylated endosomal SNARE TLG1 to the MVB pathway. In Saccharomyces cerevisiae (strain ATCC 204508 / S288c) (Baker's yeast), this protein is Transmembrane E3 ubiquitin-protein ligase 1 (TUL1).